A 293-amino-acid polypeptide reads, in one-letter code: 33 kDa chaperonin (293 aa).

Cystine bridges form between C236/C238 and C269/C272.

Belongs to the HSP33 family. In terms of processing, under oxidizing conditions two disulfide bonds are formed involving the reactive cysteines. Under reducing conditions zinc is bound to the reactive cysteines and the protein is inactive.

The protein resides in the cytoplasm. Redox regulated molecular chaperone. Protects both thermally unfolding and oxidatively damaged proteins from irreversible aggregation. Plays an important role in the bacterial defense system toward oxidative stress. This is 33 kDa chaperonin from Lactobacillus delbrueckii subsp. bulgaricus (strain ATCC 11842 / DSM 20081 / BCRC 10696 / JCM 1002 / NBRC 13953 / NCIMB 11778 / NCTC 12712 / WDCM 00102 / Lb 14).